A 430-amino-acid chain; its full sequence is UDP-N-acetylglucosamine 1-carboxyvinyltransferase (430 aa).

22-23 (KN) provides a ligand contact to phosphoenolpyruvate. Arg102 lines the UDP-N-acetyl-alpha-D-glucosamine pocket. Cys126 (proton donor) is an active-site residue. Cys126 carries the post-translational modification 2-(S-cysteinyl)pyruvic acid O-phosphothioketal. UDP-N-acetyl-alpha-D-glucosamine-binding positions include 131–135 (RPVDL), 172–175 (KVSV), Asp317, and Ile339.

Belongs to the EPSP synthase family. MurA subfamily.

It is found in the cytoplasm. The enzyme catalyses phosphoenolpyruvate + UDP-N-acetyl-alpha-D-glucosamine = UDP-N-acetyl-3-O-(1-carboxyvinyl)-alpha-D-glucosamine + phosphate. It participates in cell wall biogenesis; peptidoglycan biosynthesis. Its function is as follows. Cell wall formation. Adds enolpyruvyl to UDP-N-acetylglucosamine. In Rhizobium leguminosarum bv. trifolii (strain WSM2304), this protein is UDP-N-acetylglucosamine 1-carboxyvinyltransferase.